Consider the following 391-residue polypeptide: Phosphoglycerate kinase (391 aa).

Substrate contacts are provided by residues 21 to 23 (DLN), Arg-36, 59 to 62 (HLGR), Arg-113, and Arg-146. Residues Lys-197, Glu-319, and 345-348 (GGDT) contribute to the ATP site.

Belongs to the phosphoglycerate kinase family. As to quaternary structure, monomer.

The protein localises to the cytoplasm. The catalysed reaction is (2R)-3-phosphoglycerate + ATP = (2R)-3-phospho-glyceroyl phosphate + ADP. The protein operates within carbohydrate degradation; glycolysis; pyruvate from D-glyceraldehyde 3-phosphate: step 2/5. This Xanthomonas oryzae pv. oryzae (strain MAFF 311018) protein is Phosphoglycerate kinase.